The primary structure comprises 262 residues: GTP cyclohydrolase FolE2 (262 aa).

Belongs to the GTP cyclohydrolase IV family.

It catalyses the reaction GTP + H2O = 7,8-dihydroneopterin 3'-triphosphate + formate + H(+). It functions in the pathway cofactor biosynthesis; 7,8-dihydroneopterin triphosphate biosynthesis; 7,8-dihydroneopterin triphosphate from GTP: step 1/1. Functionally, converts GTP to 7,8-dihydroneopterin triphosphate. This chain is GTP cyclohydrolase FolE2, found in Dichelobacter nodosus (strain VCS1703A).